Here is a 300-residue protein sequence, read N- to C-terminus: 33 kDa chaperonin (300 aa).

2 disulfide bridges follow: Cys235/Cys237 and Cys269/Cys272.

The protein belongs to the HSP33 family. In terms of processing, under oxidizing conditions two disulfide bonds are formed involving the reactive cysteines. Under reducing conditions zinc is bound to the reactive cysteines and the protein is inactive.

It localises to the cytoplasm. In terms of biological role, redox regulated molecular chaperone. Protects both thermally unfolding and oxidatively damaged proteins from irreversible aggregation. Plays an important role in the bacterial defense system toward oxidative stress. The sequence is that of 33 kDa chaperonin from Pseudomonas fluorescens (strain ATCC BAA-477 / NRRL B-23932 / Pf-5).